Here is a 400-residue protein sequence, read N- to C-terminus: MQESTMKFGIVIVAAGRGERAGSPEEGPKQYRPIGGRAVIEHTLATFLRWNDACPIVVVSHADDAALLSPILARLDAGERITTVTGGATRQQSVLAGLEALSSHGLTHVMIHDAVRPFVAADMLERIAALHRAGAGGVLPALPVTDTLKRGLEDRVVETVSRQGLYAAQTPQSFSYSDILDAHRAAAASGKTDFTDDASIAEWTGLTVTLTEGSVDNVKLTLKRDIAMADEKLSHALPDVRTGNGYDVHQLEAGDGVTLCGIFIEHDQRLKGHSDADVALHALTDALLATCGAGDIGDHFPPSDPQWKGAASRIFLEHAAKVVRDNGGTIMNADVSLIAEAPRIGPHRQAMREALSDMLGIALERCSVKATTNETIGFVGRREGIAAIATATVVYQGRPL.

A 2-C-methyl-D-erythritol 4-phosphate cytidylyltransferase region spans residues 1 to 240 (MQESTMKFGI…EKLSHALPDV (240 aa)). Positions 241-400 (RTGNGYDVHQ…ATVVYQGRPL (160 aa)) are 2-C-methyl-D-erythritol 2,4-cyclodiphosphate synthase. Residues D247 and H249 each contribute to the a divalent metal cation site. Residues 247–249 (DVH) and 273–274 (HS) contribute to the 4-CDP-2-C-methyl-D-erythritol 2-phosphate site. Residue H281 coordinates a divalent metal cation. 4-CDP-2-C-methyl-D-erythritol 2-phosphate-binding positions include 295–297 (DIG), 371–374 (TTNE), F378, and R381.

It in the N-terminal section; belongs to the IspD/TarI cytidylyltransferase family. IspD subfamily. The protein in the C-terminal section; belongs to the IspF family. A divalent metal cation is required as a cofactor.

The enzyme catalyses 2-C-methyl-D-erythritol 4-phosphate + CTP + H(+) = 4-CDP-2-C-methyl-D-erythritol + diphosphate. It carries out the reaction 4-CDP-2-C-methyl-D-erythritol 2-phosphate = 2-C-methyl-D-erythritol 2,4-cyclic diphosphate + CMP. The protein operates within isoprenoid biosynthesis; isopentenyl diphosphate biosynthesis via DXP pathway; isopentenyl diphosphate from 1-deoxy-D-xylulose 5-phosphate: step 2/6. Its pathway is isoprenoid biosynthesis; isopentenyl diphosphate biosynthesis via DXP pathway; isopentenyl diphosphate from 1-deoxy-D-xylulose 5-phosphate: step 4/6. Functionally, bifunctional enzyme that catalyzes the formation of 4-diphosphocytidyl-2-C-methyl-D-erythritol from CTP and 2-C-methyl-D-erythritol 4-phosphate (MEP) (IspD), and catalyzes the conversion of 4-diphosphocytidyl-2-C-methyl-D-erythritol 2-phosphate (CDP-ME2P) to 2-C-methyl-D-erythritol 2,4-cyclodiphosphate (ME-CPP) with a corresponding release of cytidine 5-monophosphate (CMP) (IspF). In Agrobacterium fabrum (strain C58 / ATCC 33970) (Agrobacterium tumefaciens (strain C58)), this protein is Bifunctional enzyme IspD/IspF.